A 196-amino-acid polypeptide reads, in one-letter code: Probable GTP-binding protein EngB (196 aa).

Positions 22–195 (KLPEVALAGR…WNWIESITKV (174 aa)) constitute an EngB-type G domain. GTP is bound by residues 30-37 (GRSNVGKS), 57-61 (GKTQT), 75-78 (DVPG), 142-145 (TKID), and 174-176 (FSA). Mg(2+)-binding residues include serine 37 and threonine 59.

The protein belongs to the TRAFAC class TrmE-Era-EngA-EngB-Septin-like GTPase superfamily. EngB GTPase family. Requires Mg(2+) as cofactor.

Its function is as follows. Necessary for normal cell division and for the maintenance of normal septation. This is Probable GTP-binding protein EngB from Ligilactobacillus salivarius (strain UCC118) (Lactobacillus salivarius).